A 137-amino-acid polypeptide reads, in one-letter code: MLQPKRTKFRKVHKGRNTGLAHRGSTVSFGSIAIKATERGRMTARQIEAARRTISRRIKRGGKIFIRVFPDKPITEKPLEVRMGNGKGNVEYWVCEIKPGKILYEIEGVNEDLAREAFALAAAKLPFKTTIVTRTVM.

Belongs to the universal ribosomal protein uL16 family. In terms of assembly, part of the 50S ribosomal subunit.

Functionally, binds 23S rRNA and is also seen to make contacts with the A and possibly P site tRNAs. The polypeptide is Large ribosomal subunit protein uL16 (Acinetobacter baumannii (strain AB307-0294)).